A 259-amino-acid polypeptide reads, in one-letter code: DnaJ homolog subfamily C member 9 (259 aa).

One can recognise a J domain in the interval 15-82; the sequence is DLYQVLGVRR…EQKAVYDEQG (68 aa). Serine 109 is modified (phosphoserine). Positions 171-248 are required for histone binding; that stretch reads EIPAYSAFVK…EAKYCKPSKG (78 aa).

In terms of assembly, forms a co-chaperone complex with MCM2 and histone H3.3-H4 dimers. Within the complex, interacts (via C-terminus) with MCM2 (via N-terminus); the interaction is histone-dependent. Within the complex, interacts (via C-terminus) with histone H3.3-H4 heterodimers; the interaction is direct. Interacts with histones H4, H3.3, H3.2 and H3.1, but not with CENPA or the testis-specific histone H3.1t. Interacts (via J domain) with HSPA1A, HSPA1B and HSPA8. May interact with TONSL; the interaction seems to be histone-dependent. May interact with HSPA8 and BAG2; the interactions seem to be histone-dependent.

The protein resides in the nucleus. It localises to the cytoplasm. The protein localises to the cell membrane. In terms of biological role, acts as a dual histone chaperone and heat shock co-chaperone. As a histone chaperone, forms a co-chaperone complex with MCM2 and histone H3-H4 heterodimers; and may thereby assist MCM2 in histone H3-H4 heterodimer recognition and facilitate the assembly of histones into nucleosomes. May also act as a histone co-chaperone together with TONSL. May recruit histone chaperones ASF1A, NASP and SPT2 to histone H3-H4 heterodimers. Also plays a role as co-chaperone of the HSP70 family of molecular chaperone proteins, such as HSPA1A, HSPA1B and HSPA8. As a co-chaperone, may play a role in the recruitment of HSP70-type molecular chaperone machinery to histone H3-H4 substrates, thereby maintaining the histone structural integrity. Exhibits activity to assemble histones onto DNA in vitro. In Mus musculus (Mouse), this protein is DnaJ homolog subfamily C member 9 (Dnajc9).